Consider the following 673-residue polypeptide: Protein transport Sec1a (673 aa).

The tract at residues 538-591 (SSHKEESEARTGSVRKSSAPTAVPERKATPHSMRSRRTATWARPHSSDDGYSSD) is disordered.

Belongs to the STXBP/unc-18/SEC1 family. As to quaternary structure, does not bind the syntaxin KNOLLE.

Involved in the vesicle trafficking. Binds syntaxins. In Arabidopsis thaliana (Mouse-ear cress), this protein is Protein transport Sec1a (SEC1A).